The primary structure comprises 143 residues: uncharacterized protein (143 aa).

The signal sequence occupies residues 1–32 (MITNLRRRTAMAAAGLGAALGLGILLVPTVDA).

To M.tuberculosis Rv1269c.

This is an uncharacterized protein from Mycobacterium tuberculosis (strain CDC 1551 / Oshkosh).